The sequence spans 188 residues: ATP synthase subunit delta (188 aa).

Belongs to the ATPase delta chain family. F-type ATPases have 2 components, F(1) - the catalytic core - and F(0) - the membrane proton channel. F(1) has five subunits: alpha(3), beta(3), gamma(1), delta(1), epsilon(1). F(0) has three main subunits: a(1), b(2) and c(10-14). The alpha and beta chains form an alternating ring which encloses part of the gamma chain. F(1) is attached to F(0) by a central stalk formed by the gamma and epsilon chains, while a peripheral stalk is formed by the delta and b chains.

The protein resides in the cell inner membrane. Its function is as follows. F(1)F(0) ATP synthase produces ATP from ADP in the presence of a proton or sodium gradient. F-type ATPases consist of two structural domains, F(1) containing the extramembraneous catalytic core and F(0) containing the membrane proton channel, linked together by a central stalk and a peripheral stalk. During catalysis, ATP synthesis in the catalytic domain of F(1) is coupled via a rotary mechanism of the central stalk subunits to proton translocation. In terms of biological role, this protein is part of the stalk that links CF(0) to CF(1). It either transmits conformational changes from CF(0) to CF(1) or is implicated in proton conduction. The protein is ATP synthase subunit delta of Rhizobium rhizogenes (strain K84 / ATCC BAA-868) (Agrobacterium radiobacter).